A 342-amino-acid chain; its full sequence is Isopentenyl-diphosphate delta-isomerase (342 aa).

Position 11 to 12 (11 to 12 (RK)) interacts with substrate. Residues S68, 69–71 (SMT), S99, and N128 contribute to the FMN site. Residue 99 to 101 (SQR) coordinates substrate. Q162 lines the substrate pocket. E163 contributes to the Mg(2+) binding site. FMN contacts are provided by residues K194, S219, T224, 275–277 (GVR), and 296–297 (AK).

This sequence belongs to the IPP isomerase type 2 family. In terms of assembly, homooctamer. Dimer of tetramers. FMN serves as cofactor. Requires NADPH as cofactor. The cofactor is Mg(2+).

The protein localises to the cytoplasm. The enzyme catalyses isopentenyl diphosphate = dimethylallyl diphosphate. In terms of biological role, involved in the biosynthesis of isoprenoids. Catalyzes the 1,3-allylic rearrangement of the homoallylic substrate isopentenyl (IPP) to its allylic isomer, dimethylallyl diphosphate (DMAPP). The chain is Isopentenyl-diphosphate delta-isomerase from Legionella pneumophila (strain Corby).